Consider the following 370-residue polypeptide: uncharacterized protein (370 aa).

Residues aspartate 152, histidine 154, aspartate 184, asparagine 215, histidine 306, and histidine 308 each contribute to the a divalent metal cation site.

Belongs to the metallophosphoesterase superfamily. A divalent metal cation serves as cofactor.

This is an uncharacterized protein from Helicobacter pylori (strain J99 / ATCC 700824) (Campylobacter pylori J99).